Consider the following 864-residue polypeptide: Alanine--tRNA ligase (864 aa).

Residues His-553, His-557, Cys-655, and His-659 each coordinate Zn(2+). The disordered stretch occupies residues 828 to 847 (VGGKGGGRPDMAQAGGKDPS).

The protein belongs to the class-II aminoacyl-tRNA synthetase family. Requires Zn(2+) as cofactor.

Its subcellular location is the cytoplasm. The catalysed reaction is tRNA(Ala) + L-alanine + ATP = L-alanyl-tRNA(Ala) + AMP + diphosphate. Functionally, catalyzes the attachment of alanine to tRNA(Ala) in a two-step reaction: alanine is first activated by ATP to form Ala-AMP and then transferred to the acceptor end of tRNA(Ala). Also edits incorrectly charged Ser-tRNA(Ala) and Gly-tRNA(Ala) via its editing domain. The protein is Alanine--tRNA ligase of Hydrogenovibrio crunogenus (strain DSM 25203 / XCL-2) (Thiomicrospira crunogena).